Consider the following 256-residue polypeptide: Leucyl/phenylalanyl-tRNA--protein transferase (256 aa).

This sequence belongs to the L/F-transferase family.

It localises to the cytoplasm. The enzyme catalyses N-terminal L-lysyl-[protein] + L-leucyl-tRNA(Leu) = N-terminal L-leucyl-L-lysyl-[protein] + tRNA(Leu) + H(+). It catalyses the reaction N-terminal L-arginyl-[protein] + L-leucyl-tRNA(Leu) = N-terminal L-leucyl-L-arginyl-[protein] + tRNA(Leu) + H(+). The catalysed reaction is L-phenylalanyl-tRNA(Phe) + an N-terminal L-alpha-aminoacyl-[protein] = an N-terminal L-phenylalanyl-L-alpha-aminoacyl-[protein] + tRNA(Phe). Functions in the N-end rule pathway of protein degradation where it conjugates Leu, Phe and, less efficiently, Met from aminoacyl-tRNAs to the N-termini of proteins containing an N-terminal arginine or lysine. This is Leucyl/phenylalanyl-tRNA--protein transferase from Hydrogenovibrio crunogenus (strain DSM 25203 / XCL-2) (Thiomicrospira crunogena).